A 263-amino-acid polypeptide reads, in one-letter code: MTKNNEGFTHRNFAAVLQKYKYDLNLGDIVAGTIFSFELNGVLVDIGTPISAYLPIQEVSSNQDLNNFTSLNINDTREFFLLDYNIQSKQLILSIRRLEYIRAWKRIRQLLAEDSLLNVMIKGFNKGGMIINLEGISGFVPNSHLGNFQKSEQFNNKFIKLKLLNVEEKSNNLILSHRRALISQASSNLIVGNIIEGIINQITPYGLFIKVGNLKGLVHISEINIKNLEQISSQFKIGDTIKAVIIHVDKKQGRLSLSMKHLR.

S1 motif domains are found at residues 27–96 (GDIV…LSIR), 114–178 (DSLL…LSHR), and 192–260 (GNII…LSMK).

This sequence belongs to the bacterial ribosomal protein bS1 family.

It localises to the plastid. Its subcellular location is the chloroplast. The protein is Small ribosomal subunit protein bS1c (rps1) of Pyropia yezoensis (Susabi-nori).